A 640-amino-acid polypeptide reads, in one-letter code: Preterminal protein (640 aa).

Residues 232-257 (PSQEGEGEERENPDRASSRPRPQETV) form a disordered region. A Nuclear localization signal motif is present at residues 351–360 (RLPVRRRRRR). Serine 549 is modified (O-(5'-phospho-DNA)-serine). The segment at 614–640 (GADVPLPAMPPGPEPPLPPGARPRHRF) is disordered. The segment covering 620 to 634 (PAMPPGPEPPLPPGA) has biased composition (pro residues).

The protein belongs to the adenoviridae terminal protein family. In terms of assembly, heterodimer with the polymerase; this heterodimer binds to bp 9 to 18 of the genome. Interacts with host POU2F1; POU2F1 binds to the auxiliary sequences in the inverted terminal repeats and tethers the pTP-POL heterodimer to the origin DNA thereby participating in the assembly of the pre-initiation complex (POL-TP-DBP-NFIA-POU2F1). Preterminal protein is used to replicate viral genome, upon genomic encapsidation it is processed first into iTP and finally into TP by adenovirus protease.

The protein resides in the host nucleus matrix. Functionally, protein covalently bound to the viral DNA that acts as a primer for viral genomic replication by DNA strand displacement. Assembles on the viral origin of replication in an initiation complex with viral polymerase, DBP, host NFIA and host POU2F1/OCT1. During initiation, the polymerase covalently couples the first dCTP with Ser-580 of pTP. The terminal protein stimulates the template activity over 20 fold compared to protein-free templates. Neo-synthesized viral genomes are linked to two preterminal proteins, one for each 5' end. These new genomes are encapsidated in the nucleus, and during capsid maturation by viral protease, preterminal protein is first cleaved into intermediary (iTP), then into mature TP. May play a role in host nuclear matrix localization of genomic DNA. This chain is Preterminal protein, found in Human adenovirus B serotype 7 (HAdV-7).